A 185-amino-acid chain; its full sequence is Large ribosomal subunit protein bL25 (185 aa).

Belongs to the bacterial ribosomal protein bL25 family. CTC subfamily. Part of the 50S ribosomal subunit; part of the 5S rRNA/L5/L18/L25 subcomplex. Contacts the 5S rRNA. Binds to the 5S rRNA independently of L5 and L18.

This is one of the proteins that binds to the 5S RNA in the ribosome where it forms part of the central protuberance. The polypeptide is Large ribosomal subunit protein bL25 (Chlamydia abortus (strain DSM 27085 / S26/3) (Chlamydophila abortus)).